The sequence spans 485 residues: Trigger factor (485 aa).

The 86-residue stretch at 171-256 folds into the PPIase FKBP-type domain; sequence GDRVVIDFVG…VKAVKAPGEA (86 aa). The interval 443 to 485 is disordered; sequence FADDEDEAAEAAAPASEAGASKGVISEGVISEGSAPSHETGAA. Residues 452-462 are compositionally biased toward low complexity; it reads EAAAPASEAGA.

Belongs to the FKBP-type PPIase family. Tig subfamily.

The protein localises to the cytoplasm. It catalyses the reaction [protein]-peptidylproline (omega=180) = [protein]-peptidylproline (omega=0). Its function is as follows. Involved in protein export. Acts as a chaperone by maintaining the newly synthesized protein in an open conformation. Functions as a peptidyl-prolyl cis-trans isomerase. This chain is Trigger factor, found in Methylobacterium sp. (strain 4-46).